We begin with the raw amino-acid sequence, 256 residues long: Matrix protein (256 aa).

Residues 1–110 (METYVNKLHE…KLAYDVTTPC (110 aa)) form an interaction with M2-1 region. Residues 110–183 (CEIKACSLTC…LNTLENITTT (74 aa)) are nuclear targeting and binding to host importin KPNB1. Residues 194–206 (IIPYSGLLLVITV) carry the Nuclear export signal motif. Thr205 carries the phosphothreonine; by host CK2 modification.

Belongs to the pneumovirinae M protein family. In terms of assembly, forms dimers. Forms higher-order oligomers. Interacts with glycoprotein G (via N-terminus). Interacts with protein M2-1; this interaction directs the matrix protein localization to cytoplasmic inclusions comprising viral proteins L, N, P, and M2-1 and mediates the matrix protein association with the nucleocapsid. Interacts with host importin KPNB1; this interaction mediates nuclear import of the matrix protein early during infection. Interacts with host AP3M1; this interaction plays an essential role in trafficking the matrix protein in host cells. Interacts with host CAV1; this interaction probably facilitates viral budding. Interacts with host CFL1; this interaction probably facilitates viral replication. Interacts with host ZNF502; this interaction probably facilitates viral release. Interacts with host RACK1. Post-translationally, phosphorylation is important for oligomerization.

It is found in the virion. The protein localises to the host cytoplasm. Its subcellular location is the host nucleus. The protein resides in the host cell membrane. Functionally, plays a crucial role in virus assembly into filaments and budding. Early in infection, localizes in the nucleus where it inhibits host cell transcription through direct binding to host chromatin. Later in infection, traffics to the cytoplasm through the action of host CRM1 to associate with inclusion bodies, the site of viral transcription and replication. During virus assembly and budding, acts as a bridge between the nucleocapsid and the lipid bilayer. Also plays a role in the inhibition of host interferon-beta response in a RACK1-dependent manner. This chain is Matrix protein (M), found in Homo sapiens (Human).